Reading from the N-terminus, the 230-residue chain is UPF0502 protein Oter_3715 (230 aa).

The protein belongs to the UPF0502 family.

This chain is UPF0502 protein Oter_3715, found in Opitutus terrae (strain DSM 11246 / JCM 15787 / PB90-1).